The following is a 273-amino-acid chain: Imidazole glycerol phosphate synthase subunit HisF (273 aa).

Catalysis depends on residues aspartate 11 and aspartate 134.

The protein belongs to the HisA/HisF family. As to quaternary structure, heterodimer of HisH and HisF.

It is found in the cytoplasm. It catalyses the reaction 5-[(5-phospho-1-deoxy-D-ribulos-1-ylimino)methylamino]-1-(5-phospho-beta-D-ribosyl)imidazole-4-carboxamide + L-glutamine = D-erythro-1-(imidazol-4-yl)glycerol 3-phosphate + 5-amino-1-(5-phospho-beta-D-ribosyl)imidazole-4-carboxamide + L-glutamate + H(+). Its pathway is amino-acid biosynthesis; L-histidine biosynthesis; L-histidine from 5-phospho-alpha-D-ribose 1-diphosphate: step 5/9. IGPS catalyzes the conversion of PRFAR and glutamine to IGP, AICAR and glutamate. The HisF subunit catalyzes the cyclization activity that produces IGP and AICAR from PRFAR using the ammonia provided by the HisH subunit. The chain is Imidazole glycerol phosphate synthase subunit HisF from Methanosarcina mazei (strain ATCC BAA-159 / DSM 3647 / Goe1 / Go1 / JCM 11833 / OCM 88) (Methanosarcina frisia).